The primary structure comprises 585 residues: 3-hydroxy-3-methylglutaryl-coenzyme A reductase 1 (585 aa).

Helical transmembrane passes span 38 to 58 (LYLT…FLLC) and 77 to 97 (EIVA…FFGI). The interval 98 to 169 (DFVQSLVLRP…DEMPVTVMTE (72 aa)) is linker. The segment at 170-585 (EDEEIIRSVV…SSKDVSKVSS (416 aa)) is catalytic. Glu-264 serves as the catalytic Charge relay system. An N-linked (GlcNAc...) asparagine glycan is attached at Asn-328. Lys-396 functions as the Charge relay system in the catalytic mechanism. Residue Asn-441 is glycosylated (N-linked (GlcNAc...) asparagine). The active-site Charge relay system is Asp-472. The Proton donor role is filled by His-570. Asn-574 carries N-linked (GlcNAc...) asparagine glycosylation.

The protein belongs to the HMG-CoA reductase family.

The protein localises to the endoplasmic reticulum membrane. Its subcellular location is the mitochondrion membrane. It localises to the plastid membrane. The catalysed reaction is (R)-mevalonate + 2 NADP(+) + CoA = (3S)-3-hydroxy-3-methylglutaryl-CoA + 2 NADPH + 2 H(+). The protein operates within metabolic intermediate biosynthesis; (R)-mevalonate biosynthesis; (R)-mevalonate from acetyl-CoA: step 3/3. Functionally, catalyzes the synthesis of mevalonate. The specific precursor of all isoprenoid compounds present in plants. The protein is 3-hydroxy-3-methylglutaryl-coenzyme A reductase 1 (HMG1) of Gossypium hirsutum (Upland cotton).